Here is an 84-residue protein sequence, read N- to C-terminus: Exodeoxyribonuclease 7 small subunit (84 aa).

It belongs to the XseB family. As to quaternary structure, heterooligomer composed of large and small subunits.

It is found in the cytoplasm. It carries out the reaction Exonucleolytic cleavage in either 5'- to 3'- or 3'- to 5'-direction to yield nucleoside 5'-phosphates.. Functionally, bidirectionally degrades single-stranded DNA into large acid-insoluble oligonucleotides, which are then degraded further into small acid-soluble oligonucleotides. The polypeptide is Exodeoxyribonuclease 7 small subunit (Herminiimonas arsenicoxydans).